The sequence spans 98 residues: Small ribosomal subunit protein eS24 (98 aa).

It belongs to the eukaryotic ribosomal protein eS24 family. In terms of assembly, part of the 30S ribosomal subunit.

The chain is Small ribosomal subunit protein eS24 from Thermococcus kodakarensis (strain ATCC BAA-918 / JCM 12380 / KOD1) (Pyrococcus kodakaraensis (strain KOD1)).